The sequence spans 341 residues: MKKISNNIFFIMLISGTLITISSNSWLGAWMGLEINLLSFIPLMNEGKKNLMTSESSLKYFLTQAFASSILLFAIILMMMFFNENWMMNNNFNNLLILSTLLLKSGAAPFHFWFPGVMEGLNWINGLILMTWQKIAPLMLISYNLNINFFYFTILLSMIIGALGGLNQTSLRKLMAFSSINHIGWMLMAMMNNELLWLTYFLLYSILSMSIILMFNNFKLFHFNQIFNFSMMNPYIKFFMFLNLLSLGGLPPFLGFLPKWLVIQNLVEMNQLFLLFIAVCLTLITLYYYLRMSYSIYMLNYNKNSWMLMNSYSNNNLTLILTMNFISIMGLLIITLIYLIL.

The next 8 membrane-spanning stretches (helical) occupy residues 8–28 (IFFI…SWLG), 61–81 (FLTQ…MMMF), 95–117 (LLIL…FPGV), 145–165 (LNIN…ALGG), 195–215 (LLWL…ILMF), 238–258 (FFMF…GFLP), 266–286 (LVEM…LITL), and 320–340 (ILTM…IYLI).

It belongs to the complex I subunit 2 family.

The protein resides in the mitochondrion inner membrane. The enzyme catalyses a ubiquinone + NADH + 5 H(+)(in) = a ubiquinol + NAD(+) + 4 H(+)(out). Functionally, core subunit of the mitochondrial membrane respiratory chain NADH dehydrogenase (Complex I) that is believed to belong to the minimal assembly required for catalysis. Complex I functions in the transfer of electrons from NADH to the respiratory chain. The immediate electron acceptor for the enzyme is believed to be ubiquinone. The chain is NADH-ubiquinone oxidoreductase chain 2 from Aedes aegypti (Yellowfever mosquito).